Here is an 80-residue protein sequence, read N- to C-terminus: Omega-conotoxin-like 1 (80 aa).

The N-terminal stretch at 1–22 is a signal peptide; it reads MKLTCVLIVVVLFLTACQLITT. A propeptide spanning residues 23–49 is cleaved from the precursor; sequence DDSTGKQRYQAWKLRSKMQNSVLSRLS. 3 disulfide bridges follow: Cys52/Cys66, Cys59/Cys70, and Cys65/Cys79.

It belongs to the conotoxin O1 superfamily. Peptide predicted to begin at Arg-51, but it seems more probable that it begins at Cys-52, since this position corresponds to a dibasic residue cleavage. Expressed by the venom duct.

The protein localises to the secreted. Functionally, omega-conotoxins act at presynaptic membranes, they bind and block voltage-gated calcium channels (Cav). The protein is Omega-conotoxin-like 1 of Conus capitaneus (Captain cone).